The chain runs to 54 residues: Ovomucoid (54 aa).

In terms of domain architecture, Kazal-like spans 4 to 54 (VDCSGYPQSACPQDYVPFCGSDNKTYSNKCNFCNAVADSNGTLTLSHFGKC). Cystine bridges form between Cys-6-Cys-36, Cys-14-Cys-33, and Cys-22-Cys-54. Asn-43 carries an N-linked (GlcNAc...) asparagine glycan.

It is found in the secreted. This chain is Ovomucoid, found in Gallirallus australis (Weka).